Reading from the N-terminus, the 286-residue chain is MQLLDGKALSLEIEAKVKEEVMILTSSRGVTPGLAVILVGSDPASQAYVNMKAKACKRAGIYSITHEMPESTTESQLLNAISILNNDPNIDGILVQLPLPKHINTAKVLEAIAPHKDVDGFHPQNVGRLTSNLGGFAPATPMGVMRLLQKYGIDPQGKNAVIVGASNIVGKPMASLLLNANATTTLCHIYTKDLASHTQNADILCVGVGKPNLITESMVKKGAVVIDIGINRLEDGSLVGDVDFASVAPKCSYITPVPGGVGPMTIASLLENTLKAAKTRQETPQS.

NADP(+)-binding positions include 164 to 166 (GAS), isoleucine 189, and isoleucine 230.

This sequence belongs to the tetrahydrofolate dehydrogenase/cyclohydrolase family. Homodimer.

It catalyses the reaction (6R)-5,10-methylene-5,6,7,8-tetrahydrofolate + NADP(+) = (6R)-5,10-methenyltetrahydrofolate + NADPH. The catalysed reaction is (6R)-5,10-methenyltetrahydrofolate + H2O = (6R)-10-formyltetrahydrofolate + H(+). It participates in one-carbon metabolism; tetrahydrofolate interconversion. Its function is as follows. Catalyzes the oxidation of 5,10-methylenetetrahydrofolate to 5,10-methenyltetrahydrofolate and then the hydrolysis of 5,10-methenyltetrahydrofolate to 10-formyltetrahydrofolate. This Wolinella succinogenes (strain ATCC 29543 / DSM 1740 / CCUG 13145 / JCM 31913 / LMG 7466 / NCTC 11488 / FDC 602W) (Vibrio succinogenes) protein is Bifunctional protein FolD.